The chain runs to 343 residues: MLPEQSLTTPLPATATAAPARRAAVLGVGAALPAHREPSTETERRLGLPPGWIARRTGIRERPLVGPDEATSDLAVRAGAAALAQAELSPERIGLLLLATSTPDHLLPPTAPVVAHRLGLKHAGAVDLAGACSGFLYALALADGYVRLQRTCVLVIGANVLSRRTNPDDPKTSALFADGAGAVVLGPSEGSRGIVACWLGADGSCWDDLYIPAGGSRRPLTPERVARGEHLMYMKDGRALFRRAATGMAEAGRRVLQQAGLDLDDVAWWIPHQANHRLIEEARRQLGMPEARTVNLVDRIGNSSAATIPLALALEAHRFAPGDLLLLTAVGAGLLSAAVLIQW.

Active-site residues include Cys132 and His272. The tract at residues 273–277 is ACP-binding; sequence QANHR. The active site involves Asn302.

Belongs to the thiolase-like superfamily. BioZ family.

The catalysed reaction is malonyl-[ACP] + an acyl-CoA + H(+) = a 3-oxoacyl-[ACP] + CO2 + CoA. It carries out the reaction glutaryl-CoA + malonyl-[ACP] + H(+) = 3-oxo-6-carboxyhexanoyl-[ACP] + CO2 + CoA. Its pathway is cofactor biosynthesis; biotin biosynthesis. Functionally, involved in the formation of the biotin precursor pimeloyl-ACP. Catalyzes the condensation of glutaryl-CoA, an intermediate in lysine degradation, with malonyl-ACP to produce 3-oxopimeloyl-ACP. The chain is 3-oxopimeloyl-[acyl-carrier-protein] synthase from Rhodothermus marinus (strain ATCC 43812 / DSM 4252 / R-10) (Rhodothermus obamensis).